Here is an 886-residue protein sequence, read N- to C-terminus: Coatomer subunit gamma (886 aa).

HEAT repeat units follow at residues 66–103, 288–325, 327–359, 360–397, and 472–509; these read VEAT…SSDE, RELT…THPM, VTNC…TGNE, SSVE…KFPL, and SDPS…MVES. The segment at 592–613 is disordered; the sequence is SQPLAEKKAQGKKPTGLGAPPA.

The protein belongs to the COPG family. In terms of assembly, oligomeric complex that consists of at least the alpha, beta, beta', gamma, delta, epsilon and zeta subunits.

It is found in the cytoplasm. Its subcellular location is the golgi apparatus membrane. The protein localises to the cytoplasmic vesicle. The protein resides in the COPI-coated vesicle membrane. Functionally, the coatomer is a cytosolic protein complex that binds to dilysine motifs and reversibly associates with Golgi non-clathrin-coated vesicles, which further mediate biosynthetic protein transport from the ER, via the Golgi up to the trans Golgi network. Coatomer complex is required for budding from Golgi membranes, and is essential for the retrograde Golgi-to-ER transport of dilysine-tagged proteins. The polypeptide is Coatomer subunit gamma (Arabidopsis thaliana (Mouse-ear cress)).